An 86-amino-acid chain; its full sequence is Candiduxin-2 (86 aa).

Positions 1 to 21 are cleaved as a signal peptide; that stretch reads MKTLLLTLVVLTIACLDLGYT. Cystine bridges form between cysteine 24-cysteine 45, cysteine 38-cysteine 62, cysteine 66-cysteine 78, and cysteine 79-cysteine 84.

The protein belongs to the three-finger toxin family. Short-chain subfamily. Orphan group IX sub-subfamily. Expressed by the venom gland.

It is found in the secreted. The polypeptide is Candiduxin-2 (Bungarus candidus (Malayan krait)).